The chain runs to 70 residues: NAD(P)H-quinone oxidoreductase subunit O (70 aa).

This sequence belongs to the complex I NdhO subunit family. NDH-1 can be composed of about 15 different subunits; different subcomplexes with different compositions have been identified which probably have different functions.

Its subcellular location is the cellular thylakoid membrane. The enzyme catalyses a plastoquinone + NADH + (n+1) H(+)(in) = a plastoquinol + NAD(+) + n H(+)(out). It catalyses the reaction a plastoquinone + NADPH + (n+1) H(+)(in) = a plastoquinol + NADP(+) + n H(+)(out). NDH-1 shuttles electrons from an unknown electron donor, via FMN and iron-sulfur (Fe-S) centers, to quinones in the respiratory and/or the photosynthetic chain. The immediate electron acceptor for the enzyme in this species is believed to be plastoquinone. Couples the redox reaction to proton translocation, and thus conserves the redox energy in a proton gradient. Cyanobacterial NDH-1 also plays a role in inorganic carbon-concentration. The sequence is that of NAD(P)H-quinone oxidoreductase subunit O from Nostoc sp. (strain PCC 7120 / SAG 25.82 / UTEX 2576).